The sequence spans 301 residues: Glycine--tRNA ligase alpha subunit (301 aa).

The protein belongs to the class-II aminoacyl-tRNA synthetase family. Tetramer of two alpha and two beta subunits.

The protein resides in the cytoplasm. It catalyses the reaction tRNA(Gly) + glycine + ATP = glycyl-tRNA(Gly) + AMP + diphosphate. The protein is Glycine--tRNA ligase alpha subunit of Pseudoalteromonas atlantica (strain T6c / ATCC BAA-1087).